The chain runs to 263 residues: Acidic leucine-rich nuclear phosphoprotein 32 family member E (263 aa).

3 LRR repeats span residues 43–64 (ELEF…PKLP), 65–84 (KLRK…DVLT), and 89–110 (NITY…EALA). Residues 123–161 (CEITNLEDYRENIFQRLSQITYLDGFDQEDNEAPDSEED) enclose the LRRCT domain. Positions 146–263 (DGFDQEDNEA…PEDEGDEDED (118 aa)) are disordered. 3 stretches are compositionally biased toward acidic residues: residues 148–172 (FDQE…DDEE), 180–203 (AEED…EEEV), and 214–242 (RDEE…DEAA). Residues 202–263 (EVGLSYLMKE…PEDEGDEDED (62 aa)) form a ZID domain region.

This sequence belongs to the ANP32 family. As to quaternary structure, component of a SWR1-like complex. Interacts with H2A.Z/H2AZ1. In terms of processing, phosphorylated. The phosphorylation is nuclear localization signal (NLS)-dependent.

It localises to the cytoplasm. Its subcellular location is the nucleus. In terms of biological role, histone chaperone that specifically mediates the genome-wide removal of histone H2A.Z/H2AZ1 from the nucleosome: removes H2A.Z/H2AZ1 from its normal sites of deposition, especially from enhancer and insulator regions. Not involved in deposition of H2A.Z/H2AZ1 in the nucleosome. May stabilize the evicted H2A.Z/H2AZ1-H2B dimer, thus shifting the equilibrium towards dissociation and the off-chromatin state. Inhibits activity of protein phosphatase 2A (PP2A). Does not inhibit protein phosphatase 1. May play a role in cerebellar development and synaptogenesis. This Xenopus laevis (African clawed frog) protein is Acidic leucine-rich nuclear phosphoprotein 32 family member E (anp32e).